Here is a 261-residue protein sequence, read N- to C-terminus: Succinate dehydrogenase iron-sulfur subunit (261 aa).

Residues 28-119 enclose the 2Fe-2S ferredoxin-type domain; the sequence is RKVKVYRYDP…DIKIYPLPHM (92 aa). Residues Cys-80, Cys-85, and Cys-100 each contribute to the [2Fe-2S] cluster site. In terms of domain architecture, 4Fe-4S ferredoxin-type spans 161–191; sequence DREKLDGLYECILCACCSTSCPSYWWNGDKY. 3 residues coordinate [4Fe-4S] cluster: Cys-171, Cys-174, and Cys-177. Cys-181 serves as a coordination point for [3Fe-4S] cluster. Trp-186 provides a ligand contact to a ubiquinone. Residues Cys-228 and Cys-234 each coordinate [3Fe-4S] cluster. Cys-238 contacts [4Fe-4S] cluster.

It belongs to the succinate dehydrogenase/fumarate reductase iron-sulfur protein family. In terms of assembly, part of an enzyme complex containing four subunits: a flavoprotein, an iron-sulfur, cytochrome b-556, and a hydrophobic anchor protein. It depends on [2Fe-2S] cluster as a cofactor. The cofactor is [3Fe-4S] cluster. [4Fe-4S] cluster serves as cofactor.

The enzyme catalyses a quinone + succinate = fumarate + a quinol. The protein operates within carbohydrate metabolism; tricarboxylic acid cycle; fumarate from succinate (bacterial route): step 1/1. The polypeptide is Succinate dehydrogenase iron-sulfur subunit (sdhB) (Rickettsia prowazekii (strain Madrid E)).